A 375-amino-acid chain; its full sequence is MTLQATPLNAIHRALGARMVDFGGWDMPVNYGSQIEEHNAVRSDAGMFDVSHMCVVDLNGANTRAFLRGLLANNVDKLQTPGKALYSCMLDEKGGVIDDLIVYFFAEDRFRLVVNASTALGDIEWIRARNDATGSGVTITPRRGDVAPAGALPLAIVAVQGPNARTKVWNTFPSTQPSDALKPFNAVVVHDPAIGEIMVARTGYTGEDGFELVVPAENVAAVWEKLDAAGVRPAGLGARDTLRLEAGMNLYGQDMDINTSPLDAGLAWTVDLQSERDFTGKAALAAAGQRQQFLGLILRDKGGVLRAHQKVVTAAGDGEITSGTFSPSLSQSIAFARLPMGVAVGDTVQVEIRDRKLAATVVKLPFVRNGKALVS.

It belongs to the GcvT family. In terms of assembly, the glycine cleavage system is composed of four proteins: P, T, L and H.

It carries out the reaction N(6)-[(R)-S(8)-aminomethyldihydrolipoyl]-L-lysyl-[protein] + (6S)-5,6,7,8-tetrahydrofolate = N(6)-[(R)-dihydrolipoyl]-L-lysyl-[protein] + (6R)-5,10-methylene-5,6,7,8-tetrahydrofolate + NH4(+). Functionally, the glycine cleavage system catalyzes the degradation of glycine. The chain is Aminomethyltransferase from Cupriavidus pinatubonensis (strain JMP 134 / LMG 1197) (Cupriavidus necator (strain JMP 134)).